Reading from the N-terminus, the 433-residue chain is Histidinol dehydrogenase (433 aa).

NAD(+)-binding residues include Tyr133, Gln194, and Asn217. Positions 240, 262, and 265 each coordinate substrate. Residues Gln262 and His265 each contribute to the Zn(2+) site. Residues Glu330 and His331 each act as proton acceptor in the active site. Residues His331, Asp364, Glu418, and His423 each contribute to the substrate site. Asp364 lines the Zn(2+) pocket. Position 423 (His423) interacts with Zn(2+).

It belongs to the histidinol dehydrogenase family. Zn(2+) serves as cofactor.

It catalyses the reaction L-histidinol + 2 NAD(+) + H2O = L-histidine + 2 NADH + 3 H(+). The protein operates within amino-acid biosynthesis; L-histidine biosynthesis; L-histidine from 5-phospho-alpha-D-ribose 1-diphosphate: step 9/9. In terms of biological role, catalyzes the sequential NAD-dependent oxidations of L-histidinol to L-histidinaldehyde and then to L-histidine. This is Histidinol dehydrogenase from Hydrogenovibrio crunogenus (strain DSM 25203 / XCL-2) (Thiomicrospira crunogena).